The sequence spans 419 residues: Phospho-N-acetylmuramoyl-pentapeptide-transferase (419 aa).

10 helical membrane passes run 22–42 (YVSF…TVIG), 72–92 (TPTM…LLLA), 99–119 (ILLM…DDYI), 135–155 (IIGQ…NPAV), 208–228 (VLFG…FISN), 238–258 (GLAT…AYVS), 278–298 (LTIF…YNAY), 303–323 (FMGD…ALII), 328–348 (LLPI…IQVF), and 396–416 (KITV…IATL).

This sequence belongs to the glycosyltransferase 4 family. MraY subfamily. The cofactor is Mg(2+).

The protein localises to the cell inner membrane. The catalysed reaction is UDP-N-acetyl-alpha-D-muramoyl-L-alanyl-gamma-D-glutamyl-meso-2,6-diaminopimeloyl-D-alanyl-D-alanine + di-trans,octa-cis-undecaprenyl phosphate = di-trans,octa-cis-undecaprenyl diphospho-N-acetyl-alpha-D-muramoyl-L-alanyl-D-glutamyl-meso-2,6-diaminopimeloyl-D-alanyl-D-alanine + UMP. It participates in cell wall biogenesis; peptidoglycan biosynthesis. Its function is as follows. Catalyzes the initial step of the lipid cycle reactions in the biosynthesis of the cell wall peptidoglycan: transfers peptidoglycan precursor phospho-MurNAc-pentapeptide from UDP-MurNAc-pentapeptide onto the lipid carrier undecaprenyl phosphate, yielding undecaprenyl-pyrophosphoryl-MurNAc-pentapeptide, known as lipid I. The sequence is that of Phospho-N-acetylmuramoyl-pentapeptide-transferase from Porphyromonas gingivalis (strain ATCC BAA-308 / W83).